The sequence spans 256 residues: Thiazole synthase (256 aa).

Lys-96 (schiff-base intermediate with DXP) is an active-site residue. 1-deoxy-D-xylulose 5-phosphate is bound by residues Gly-157, 183–184, and 205–206; these read AG and NT.

This sequence belongs to the ThiG family. Homotetramer. Forms heterodimers with either ThiH or ThiS.

The protein resides in the cytoplasm. It catalyses the reaction [ThiS sulfur-carrier protein]-C-terminal-Gly-aminoethanethioate + 2-iminoacetate + 1-deoxy-D-xylulose 5-phosphate = [ThiS sulfur-carrier protein]-C-terminal Gly-Gly + 2-[(2R,5Z)-2-carboxy-4-methylthiazol-5(2H)-ylidene]ethyl phosphate + 2 H2O + H(+). It participates in cofactor biosynthesis; thiamine diphosphate biosynthesis. Catalyzes the rearrangement of 1-deoxy-D-xylulose 5-phosphate (DXP) to produce the thiazole phosphate moiety of thiamine. Sulfur is provided by the thiocarboxylate moiety of the carrier protein ThiS. In vitro, sulfur can be provided by H(2)S. The protein is Thiazole synthase of Clostridium beijerinckii (strain ATCC 51743 / NCIMB 8052) (Clostridium acetobutylicum).